We begin with the raw amino-acid sequence, 60 residues long: Cecropin-B type 1 (60 aa).

Residues 1–24 form the signal peptide; the sequence is MNFNKLFALVLLIGLVLLTGQTEA. The residue at position 58 (isoleucine 58) is an Isoleucine amide.

The protein belongs to the cecropin family.

It localises to the secreted. Functionally, cecropins have lytic and antibacterial activity against several Gram-positive and Gram-negative bacteria. The protein is Cecropin-B type 1 (CECB1) of Aedes albopictus (Asian tiger mosquito).